The following is a 451-amino-acid chain: UPF0210 protein Cbei_2352 (451 aa).

This sequence belongs to the UPF0210 family. Homodimer.

This is UPF0210 protein Cbei_2352 from Clostridium beijerinckii (strain ATCC 51743 / NCIMB 8052) (Clostridium acetobutylicum).